Reading from the N-terminus, the 311-residue chain is Ribosomal RNA small subunit methyltransferase H (311 aa).

Residues 39-41, Asp-59, Phe-87, Asp-102, and His-109 each bind S-adenosyl-L-methionine; that span reads GGH.

It belongs to the methyltransferase superfamily. RsmH family.

The protein localises to the cytoplasm. It catalyses the reaction cytidine(1402) in 16S rRNA + S-adenosyl-L-methionine = N(4)-methylcytidine(1402) in 16S rRNA + S-adenosyl-L-homocysteine + H(+). Specifically methylates the N4 position of cytidine in position 1402 (C1402) of 16S rRNA. The chain is Ribosomal RNA small subunit methyltransferase H from Porphyromonas gingivalis (strain ATCC 33277 / DSM 20709 / CIP 103683 / JCM 12257 / NCTC 11834 / 2561).